A 740-amino-acid chain; its full sequence is Autotransporter adhesin BtaE (740 aa).

Residues 1–11 form the signal peptide; it reads MFGLSVNHAYA. The segment at 12-647 is surface exposed passenger domain; that stretch reads GPGIFINDGT…LQTLDQANAY (636 aa). The interval 648–686 is outer membrane translocation of the passenger domain; sequence TDKKFGKLNEDIVATRIEARQAAAIGLAAASLRYDDRPG. Transmembrane regions (beta stranded) follow at residues 686 to 696, 700 to 710, 719 to 725, and 728 to 739; these read GKISAAIGGGF, EGAVALGLGHT, NLSAATS, and NWGMGAGFSYTF. Residues 687–740 are translocator domain; the sequence is KISAAIGGGFWRGEGAVALGLGHTSEDQRMRSNLSAATSGGNWGMGAGFSYTFN.

Belongs to the autotransporter-2 (AT-2) (TC 1.B.40) family. Homotrimer.

The protein resides in the cell surface. It is found in the cell outer membrane. Binds to hyaluronic acid and epithelial cells, and is required for full virulence in the mouse model. In Brucella suis biovar 1 (strain 1330), this protein is Autotransporter adhesin BtaE.